A 364-amino-acid chain; its full sequence is D-alanine--D-alanine ligase (364 aa).

The ATP-grasp domain maps to 134–347 (RRLACINGLK…YPDLLDELIN (214 aa)). 167-222 (ASEFGWPLFVKPCSLGSSVGIHKANNMDELNAAVADALRYDEEILVEEFIVGREIE) lines the ATP pocket. Asp300, Glu314, and Asn316 together coordinate Mg(2+).

Belongs to the D-alanine--D-alanine ligase family. Requires Mg(2+) as cofactor. Mn(2+) is required as a cofactor.

It is found in the cytoplasm. The enzyme catalyses 2 D-alanine + ATP = D-alanyl-D-alanine + ADP + phosphate + H(+). The protein operates within cell wall biogenesis; peptidoglycan biosynthesis. Functionally, cell wall formation. In Legionella pneumophila (strain Lens), this protein is D-alanine--D-alanine ligase.